Reading from the N-terminus, the 95-residue chain is Small ribosomal subunit protein bS18 (95 aa).

This sequence belongs to the bacterial ribosomal protein bS18 family. In terms of assembly, part of the 30S ribosomal subunit. Forms a tight heterodimer with protein bS6.

In terms of biological role, binds as a heterodimer with protein bS6 to the central domain of the 16S rRNA, where it helps stabilize the platform of the 30S subunit. The chain is Small ribosomal subunit protein bS18 from Rickettsia peacockii (strain Rustic).